A 473-amino-acid chain; its full sequence is MKSILDGLADTTFRTITTDLLYMGSNDVQYEDTKGEMASKLGYFPQKLPLSSFRRDHSPDKMTIGDDNLLSFYPLDQFNVTEFFNRSVSTFKENDDNLKCGENFMDMECFMILTASQQLIIAVLSLTLGTFTVLENFLVLCVILQSRTLRCRPSYHFIGSLAVADLLGSVIFVYSFLDFHVFHRKDSSNVFLFKLGGVTASFTASVGSLFLTAIDRYISIHRPLAYKRIVTRTKAVIAFCVMWTIAIIIAVLPLLGWNCKKLKSVCSDIFPLIDENYLMFWIGVTSILLLFIVYAYVYILWKAHSHAVRMLQRGTQKSIIIHTSEDGKVQITRPEQTRMDIRLAKTLVLILVVLIICWGPLLAIMVYDVFGKMNNPIKTVFAFCSMLCLMDSTVNPIIYALRSQDLRHAFLEQCPPCEGTSQPLDNSMESDCQHRHGNNAGNVHRAAENCIKSTVKIAKVTMSVSTETSGEAV.

The Extracellular segment spans residues methionine 1–glutamine 118. The required for mitochondrial localization stretch occupies residues lysine 2–methionine 23. Residues asparagine 79 and asparagine 85 are each glycosylated (N-linked (GlcNAc...) asparagine). Residues leucine 119–leucine 144 traverse the membrane as a helical segment. At glutamine 145–histidine 156 the chain is on the cytoplasmic side. Residues phenylalanine 157–leucine 177 form a helical membrane-spanning segment. Residues aspartate 178–asparagine 189 are Extracellular-facing. Residues valine 190–isoleucine 214 form a helical membrane-spanning segment. Residues aspartate 215 to lysine 234 lie on the Cytoplasmic side of the membrane. A helical transmembrane segment spans residues alanine 235 to tryptophan 257. Topologically, residues asparagine 258–glutamate 275 are extracellular. The chain crosses the membrane as a helical span at residues asparagine 276–tryptophan 301. Residues lysine 302–threonine 346 are Cytoplasmic-facing. A helical membrane pass occupies residues leucine 347–tyrosine 367. Topologically, residues aspartate 368–threonine 379 are extracellular. The chain crosses the membrane as a helical span at residues valine 380–leucine 401. The Cytoplasmic portion of the chain corresponds to arginine 402–valine 473. A lipid anchor (S-palmitoyl cysteine) is attached at cysteine 417.

The protein belongs to the G-protein coupled receptor 1 family. Palmitoylation at Cys-417 is important for recruitment at both plasma membrane and lipid rafts and association with G protein alpha subunits.

It is found in the cell membrane. The protein localises to the mitochondrion outer membrane. Its subcellular location is the cell projection. It localises to the axon. The protein resides in the presynapse. Its activity is regulated as follows. Hemopressin, a peptide derived from hemoglobin subunit alpha (HBA1 and/or HBA2), acts as an antagonist peptide: hemopressin-binding efficiently blocks cannabinoid receptor CNR1 and subsequent signaling. Functionally, G-protein coupled receptor for cannabinoids. Mediates many cannabinoid-induced effects in the central nervous system (CNS), as well as in peripheral tissues. Regulates cellular respiration and energy production in response to cannabinoids. Signaling typically involves reduction in cyclic AMP. This chain is Cannabinoid receptor 1 (CNR1), found in Taricha granulosa (Roughskin newt).